The primary structure comprises 203 residues: Ribosomal RNA small subunit methyltransferase G (203 aa).

S-adenosyl-L-methionine is bound by residues Gly-73, Leu-78, Val-124–Glu-125, and Arg-138.

It belongs to the methyltransferase superfamily. RNA methyltransferase RsmG family.

The protein localises to the cytoplasm. It carries out the reaction guanosine(527) in 16S rRNA + S-adenosyl-L-methionine = N(7)-methylguanosine(527) in 16S rRNA + S-adenosyl-L-homocysteine. Specifically methylates the N7 position of guanine in position 527 of 16S rRNA. This Glaesserella parasuis serovar 5 (strain SH0165) (Haemophilus parasuis) protein is Ribosomal RNA small subunit methyltransferase G.